The chain runs to 192 residues: Adenylate kinase (192 aa).

Position 10 to 15 (10 to 15) interacts with ATP; that stretch reads GAGKGT. Residues 30–59 form an NMP region; it reads STGDMLREAIEKETEIGKQAKIFIESGALV. Residues threonine 31, arginine 36, 57-59, 85-88, and glutamine 92 contribute to the AMP site; these read ALV and GYPR. Residues 126–142 form an LID region; that stretch reads KRVEEVVAVGGKIRSDD. Arginine 127 is an ATP binding site. Arginine 139 and arginine 150 together coordinate AMP. Alanine 178 is an ATP binding site.

It belongs to the adenylate kinase family. Monomer.

Its subcellular location is the cytoplasm. The catalysed reaction is AMP + ATP = 2 ADP. It participates in purine metabolism; AMP biosynthesis via salvage pathway; AMP from ADP: step 1/1. In terms of biological role, catalyzes the reversible transfer of the terminal phosphate group between ATP and AMP. Plays an important role in cellular energy homeostasis and in adenine nucleotide metabolism. This is Adenylate kinase from Bartonella bacilliformis (strain ATCC 35685 / KC583 / Herrer 020/F12,63).